Consider the following 881-residue polypeptide: DNA mismatch repair protein MutS (881 aa).

An ATP-binding site is contributed by 627–634 (GPNMGGKS).

The protein belongs to the DNA mismatch repair MutS family.

In terms of biological role, this protein is involved in the repair of mismatches in DNA. It is possible that it carries out the mismatch recognition step. This protein has a weak ATPase activity. The polypeptide is DNA mismatch repair protein MutS (Acinetobacter baumannii (strain AB307-0294)).